Reading from the N-terminus, the 110-residue chain is MLKILNMNEYISLNHYLILSSLVFTIGMFGLFMHRKNIINILMSIELMLLAVNINFVAFSVYMQELSGQIFSIIILTVAAAETAIGLAILLIYFRNKGSIKITDINKMRG.

3 consecutive transmembrane segments (helical) span residues 13–33, 41–61, and 73–93; these read LNHY…GLFM, ILMS…AFSV, and IIIL…LLIY.

Belongs to the complex I subunit 4L family. As to quaternary structure, NDH-1 is composed of 14 different subunits. Subunits NuoA, H, J, K, L, M, N constitute the membrane sector of the complex.

The protein resides in the cell inner membrane. The enzyme catalyses a quinone + NADH + 5 H(+)(in) = a quinol + NAD(+) + 4 H(+)(out). In terms of biological role, NDH-1 shuttles electrons from NADH, via FMN and iron-sulfur (Fe-S) centers, to quinones in the respiratory chain. The immediate electron acceptor for the enzyme in this species is believed to be ubiquinone. Couples the redox reaction to proton translocation (for every two electrons transferred, four hydrogen ions are translocated across the cytoplasmic membrane), and thus conserves the redox energy in a proton gradient. The chain is NADH-quinone oxidoreductase subunit K from Rickettsia typhi (strain ATCC VR-144 / Wilmington).